A 320-amino-acid polypeptide reads, in one-letter code: Cytochrome c1-1, heme protein, mitochondrial (320 aa).

Residues 1 to 77 (MSLGKKIRIG…LLSFATIAYS (77 aa)) constitute a mitochondrion transit peptide. Residues 78 to 280 (DEAEHGLECP…WAAEPEMEER (203 aa)) are Mitochondrial intermembrane-facing. The Cytochrome c domain maps to 103–210 (ASIRRGHQVY…NGQNYVFALL (108 aa)). The heme c site is built by cysteine 116, cysteine 119, histidine 120, and methionine 239. A helical transmembrane segment spans residues 281–301 (KLMGFKWIFVLSLALLQAAYY). The Mitochondrial matrix portion of the chain corresponds to 302–320 (RRLRWSVLKSRKLVLDVVN).

The protein belongs to the cytochrome c family. In terms of assembly, component of the ubiquinol-cytochrome c oxidoreductase (cytochrome b-c1 complex, complex III, CIII), a multisubunit enzyme composed of 3 respiratory subunits cytochrome b, cytochrome c1 and Rieske protein, 2 core protein subunits, and additional low-molecular weight protein subunits. The complex exists as an obligatory dimer and forms supercomplexes (SCs) in the inner mitochondrial membrane with cytochrome c oxidase (complex IV, CIV). Requires heme c as cofactor. As to expression, in all tissues analyzed.

The protein localises to the mitochondrion inner membrane. The enzyme catalyses a quinol + 2 Fe(III)-[cytochrome c](out) = a quinone + 2 Fe(II)-[cytochrome c](out) + 2 H(+)(out). Functionally, component of the ubiquinol-cytochrome c oxidoreductase, a multisubunit transmembrane complex that is part of the mitochondrial electron transport chain which drives oxidative phosphorylation. The respiratory chain contains 3 multisubunit complexes succinate dehydrogenase (complex II, CII), ubiquinol-cytochrome c oxidoreductase (cytochrome b-c1 complex, complex III, CIII) and cytochrome c oxidase (complex IV, CIV), that cooperate to transfer electrons derived from NADH and succinate to molecular oxygen, creating an electrochemical gradient over the inner membrane that drives transmembrane transport and the ATP synthase. The cytochrome b-c1 complex catalyzes electron transfer from ubiquinol to cytochrome c, linking this redox reaction to translocation of protons across the mitochondrial inner membrane, with protons being carried across the membrane as hydrogens on the quinol. In the process called Q cycle, 2 protons are consumed from the matrix, 4 protons are released into the intermembrane space and 2 electrons are passed to cytochrome c. Cytochrome c1 is a catalytic core subunit containing a c-type heme. It transfers electrons from the [2Fe-2S] iron-sulfur cluster of the Rieske protein to cytochrome c. This is Cytochrome c1-1, heme protein, mitochondrial (CYCL) from Solanum tuberosum (Potato).